The primary structure comprises 402 residues: CCA-adding enzyme (402 aa).

Residues Gly-32 and Arg-35 each coordinate ATP. CTP contacts are provided by Gly-32 and Arg-35. 2 residues coordinate Mg(2+): Asp-45 and Asp-47. The ATP site is built by Arg-116, Asp-159, Arg-162, Arg-165, and Arg-168. Residues Arg-116, Asp-159, Arg-162, Arg-165, and Arg-168 each contribute to the CTP site.

It belongs to the tRNA nucleotidyltransferase/poly(A) polymerase family. Bacterial CCA-adding enzyme type 3 subfamily. Homodimer. The cofactor is Mg(2+).

The catalysed reaction is a tRNA precursor + 2 CTP + ATP = a tRNA with a 3' CCA end + 3 diphosphate. The enzyme catalyses a tRNA with a 3' CCA end + 2 CTP + ATP = a tRNA with a 3' CCACCA end + 3 diphosphate. Catalyzes the addition and repair of the essential 3'-terminal CCA sequence in tRNAs without using a nucleic acid template. Adds these three nucleotides in the order of C, C, and A to the tRNA nucleotide-73, using CTP and ATP as substrates and producing inorganic pyrophosphate. tRNA 3'-terminal CCA addition is required both for tRNA processing and repair. Also involved in tRNA surveillance by mediating tandem CCA addition to generate a CCACCA at the 3' terminus of unstable tRNAs. While stable tRNAs receive only 3'-terminal CCA, unstable tRNAs are marked with CCACCA and rapidly degraded. This chain is CCA-adding enzyme, found in Streptococcus pyogenes serotype M6 (strain ATCC BAA-946 / MGAS10394).